Reading from the N-terminus, the 119-residue chain is Large ribosomal subunit protein uL18 (119 aa).

It belongs to the universal ribosomal protein uL18 family. As to quaternary structure, part of the 50S ribosomal subunit; part of the 5S rRNA/L5/L18/L25 subcomplex. Contacts the 5S and 23S rRNAs.

Functionally, this is one of the proteins that bind and probably mediate the attachment of the 5S RNA into the large ribosomal subunit, where it forms part of the central protuberance. The chain is Large ribosomal subunit protein uL18 from Desulfovibrio desulfuricans (strain ATCC 27774 / DSM 6949 / MB).